Reading from the N-terminus, the 81-residue chain is Photosystem I iron-sulfur center (81 aa).

4Fe-4S ferredoxin-type domains lie at 2 to 31 (SHSVKIYDTCIGCTQCVRACPLDVLEMVPW) and 37 to 68 (GQIASSPRTEDCVGCKRCETACPTDFLSIRVY). [4Fe-4S] cluster contacts are provided by cysteine 11, cysteine 14, cysteine 17, cysteine 21, cysteine 48, cysteine 51, cysteine 54, and cysteine 58.

In terms of assembly, the cyanobacterial PSI reaction center is composed of one copy each of PsaA,B,C,D,E,F,I,J,K,L,M and X, and forms trimeric complexes. [4Fe-4S] cluster serves as cofactor.

The protein resides in the cellular thylakoid membrane. The enzyme catalyses reduced [plastocyanin] + hnu + oxidized [2Fe-2S]-[ferredoxin] = oxidized [plastocyanin] + reduced [2Fe-2S]-[ferredoxin]. Functionally, apoprotein for the two 4Fe-4S centers FA and FB of photosystem I (PSI); essential for photochemical activity. FB is the terminal electron acceptor of PSI, donating electrons to ferredoxin. The C-terminus interacts with PsaA/B/D and helps assemble the protein into the PSI complex. Required for binding of PsaD and PsaE to PSI. PSI is a plastocyanin/cytochrome c6-ferredoxin oxidoreductase, converting photonic excitation into a charge separation, which transfers an electron from the donor P700 chlorophyll pair to the spectroscopically characterized acceptors A0, A1, FX, FA and FB in turn. In terms of biological role, mutant proteins with a 3Fe-4S center are not observed bound to PSI in vitro, and are probably not able to do so in vivo. In Picosynechococcus sp. (strain ATCC 27264 / PCC 7002 / PR-6) (Agmenellum quadruplicatum), this protein is Photosystem I iron-sulfur center (psaC).